We begin with the raw amino-acid sequence, 276 residues long: 2,3,4,5-tetrahydropyridine-2,6-dicarboxylate N-succinyltransferase (276 aa).

Substrate contacts are provided by R108 and D145.

This sequence belongs to the transferase hexapeptide repeat family. Homotrimer.

It is found in the cytoplasm. It catalyses the reaction (S)-2,3,4,5-tetrahydrodipicolinate + succinyl-CoA + H2O = (S)-2-succinylamino-6-oxoheptanedioate + CoA. It participates in amino-acid biosynthesis; L-lysine biosynthesis via DAP pathway; LL-2,6-diaminopimelate from (S)-tetrahydrodipicolinate (succinylase route): step 1/3. The polypeptide is 2,3,4,5-tetrahydropyridine-2,6-dicarboxylate N-succinyltransferase (Caulobacter vibrioides (strain ATCC 19089 / CIP 103742 / CB 15) (Caulobacter crescentus)).